A 495-amino-acid polypeptide reads, in one-letter code: Lysine--tRNA ligase (495 aa).

Mg(2+) is bound by residues E406 and E413.

This sequence belongs to the class-II aminoacyl-tRNA synthetase family. As to quaternary structure, homodimer. It depends on Mg(2+) as a cofactor.

The protein localises to the cytoplasm. The catalysed reaction is tRNA(Lys) + L-lysine + ATP = L-lysyl-tRNA(Lys) + AMP + diphosphate. The chain is Lysine--tRNA ligase from Staphylococcus epidermidis (strain ATCC 35984 / DSM 28319 / BCRC 17069 / CCUG 31568 / BM 3577 / RP62A).